Here is an 85-residue protein sequence, read N- to C-terminus: Large ribosomal subunit protein bL27 (85 aa).

Residues 1–22 are disordered; the sequence is MAHKKAGGSTKNGRDSESKRLG.

The protein belongs to the bacterial ribosomal protein bL27 family.

This is Large ribosomal subunit protein bL27 from Alteromonas mediterranea (strain DSM 17117 / CIP 110805 / LMG 28347 / Deep ecotype).